A 450-amino-acid chain; its full sequence is 3-phosphoshikimate 1-carboxyvinyltransferase (450 aa).

The segment at 1 to 25 (MSAHGDPKPMTARKGGALTGTAEVP) is disordered. 3-phosphoshikimate-binding residues include Lys-28, Ser-29, and Arg-33. Residue Lys-28 participates in phosphoenolpyruvate binding. Phosphoenolpyruvate contacts are provided by Gly-101 and Arg-129. The 3-phosphoshikimate site is built by Ser-174, Gln-176, Asp-327, and Lys-354. Gln-176 lines the phosphoenolpyruvate pocket. Catalysis depends on Asp-327, which acts as the Proton acceptor. Arg-358 and Arg-403 together coordinate phosphoenolpyruvate.

It belongs to the EPSP synthase family. In terms of assembly, monomer.

Its subcellular location is the cytoplasm. The enzyme catalyses 3-phosphoshikimate + phosphoenolpyruvate = 5-O-(1-carboxyvinyl)-3-phosphoshikimate + phosphate. The protein operates within metabolic intermediate biosynthesis; chorismate biosynthesis; chorismate from D-erythrose 4-phosphate and phosphoenolpyruvate: step 6/7. Functionally, catalyzes the transfer of the enolpyruvyl moiety of phosphoenolpyruvate (PEP) to the 5-hydroxyl of shikimate-3-phosphate (S3P) to produce enolpyruvyl shikimate-3-phosphate and inorganic phosphate. In Jannaschia sp. (strain CCS1), this protein is 3-phosphoshikimate 1-carboxyvinyltransferase.